A 148-amino-acid polypeptide reads, in one-letter code: UPF0179 protein Ta1159 (148 aa).

It belongs to the UPF0179 family.

The polypeptide is UPF0179 protein Ta1159 (Thermoplasma acidophilum (strain ATCC 25905 / DSM 1728 / JCM 9062 / NBRC 15155 / AMRC-C165)).